Here is a 102-residue protein sequence, read N- to C-terminus: Large ribosomal subunit protein bL21 (102 aa).

Belongs to the bacterial ribosomal protein bL21 family. In terms of assembly, part of the 50S ribosomal subunit. Contacts protein L20.

This protein binds to 23S rRNA in the presence of protein L20. The protein is Large ribosomal subunit protein bL21 of Bifidobacterium longum (strain DJO10A).